A 270-amino-acid polypeptide reads, in one-letter code: Tryptophan synthase alpha chain (270 aa).

Residues E49 and D60 each act as proton acceptor in the active site.

Belongs to the TrpA family. In terms of assembly, tetramer of two alpha and two beta chains.

It catalyses the reaction (1S,2R)-1-C-(indol-3-yl)glycerol 3-phosphate + L-serine = D-glyceraldehyde 3-phosphate + L-tryptophan + H2O. The protein operates within amino-acid biosynthesis; L-tryptophan biosynthesis; L-tryptophan from chorismate: step 5/5. Functionally, the alpha subunit is responsible for the aldol cleavage of indoleglycerol phosphate to indole and glyceraldehyde 3-phosphate. In Gluconobacter oxydans (strain 621H) (Gluconobacter suboxydans), this protein is Tryptophan synthase alpha chain.